The sequence spans 115 residues: U3-lycotoxin-Ls1f (115 aa).

The N-terminal stretch at 1–20 (MKFVLLFGVLLVTLFSYSSA) is a signal peptide. Positions 21 to 44 (EMLDDFDQADEDELLSLIEKEEAR) are excised as a propeptide. Cystine bridges form between Cys48–Cys63, Cys55–Cys72, Cys62–Cys87, and Cys74–Cys85.

Belongs to the neurotoxin 19 (CSTX) family. 01 subfamily. As to expression, expressed by the venom gland.

Its subcellular location is the secreted. This Lycosa singoriensis (Wolf spider) protein is U3-lycotoxin-Ls1f.